The sequence spans 131 residues: Small ribosomal subunit protein uS11 (131 aa).

It belongs to the universal ribosomal protein uS11 family. In terms of assembly, part of the 30S ribosomal subunit. Interacts with proteins S7 and S18. Binds to IF-3.

Its function is as follows. Located on the platform of the 30S subunit, it bridges several disparate RNA helices of the 16S rRNA. Forms part of the Shine-Dalgarno cleft in the 70S ribosome. This is Small ribosomal subunit protein uS11 from Chromobacterium violaceum (strain ATCC 12472 / DSM 30191 / JCM 1249 / CCUG 213 / NBRC 12614 / NCIMB 9131 / NCTC 9757 / MK).